A 98-amino-acid polypeptide reads, in one-letter code: Cystatin-B (98 aa).

Met1 is modified (N-acetylmethionine). A Secondary area of contact motif is present at residues 46–50 (QLVAG).

Belongs to the cystatin family. Able to form dimers stabilized by noncovalent forces.

The protein localises to the cytoplasm. This is an intracellular thiol proteinase inhibitor. In Bos taurus (Bovine), this protein is Cystatin-B (CSTB).